We begin with the raw amino-acid sequence, 68 residues long: Phylloseptin-SP1 (68 aa).

The signal sequence occupies residues 1-22 (MAFLKKSLFLVLFLGLVSLSIC). Residues 23–45 (EEKERETKEEENEQEDDNREEKR) constitute a propeptide that is removed on maturation. Residue Leu-67 is modified to Leucine amide.

In terms of tissue distribution, expressed by the skin glands.

Its subcellular location is the secreted. Functionally, weak cationic amphipathic alpha-helical antimicrobial peptide with weak activity against Gram-positive and Gram-negative bacteria and fungi. Has been tested against E.coli (MIC&gt;217.69 uM), S.aureus (MIC&gt;217.69 uM), K.pneumoniae (MIC&gt;189.00 uM) and C.albicans (MIC&gt;217.69 uM). Shows a moderate hemolytic activity. In Agalychnis spurrelli (Gliding leaf frog), this protein is Phylloseptin-SP1.